The primary structure comprises 437 residues: GTPase Der (437 aa).

2 EngA-type G domains span residues 3–168 (PLIA…PVQE) and 178–353 (TNLA…ENRS). Residues 9-16 (GRPNVGKS), 56-60 (DTGGY), 120-123 (NKVE), 184-191 (GRPNVGKS), 231-235 (DTAGL), and 296-299 (NKWD) each bind GTP. The 84-residue stretch at 354–437 (RKITTSALNR…VTVSLRFFKK (84 aa)) folds into the KH-like domain.

This sequence belongs to the TRAFAC class TrmE-Era-EngA-EngB-Septin-like GTPase superfamily. EngA (Der) GTPase family. Associates with the 50S ribosomal subunit.

Functionally, GTPase that plays an essential role in the late steps of ribosome biogenesis. The sequence is that of GTPase Der from Chlorobium phaeobacteroides (strain DSM 266 / SMG 266 / 2430).